A 266-amino-acid chain; its full sequence is 3-methyl-2-oxobutanoate hydroxymethyltransferase (266 aa).

Mg(2+) contacts are provided by Asp-43 and Asp-82. 3-methyl-2-oxobutanoate-binding positions include 43–44 (DS), Asp-82, and Lys-110. Mg(2+) is bound at residue Glu-112. Catalysis depends on Glu-179, which acts as the Proton acceptor.

It belongs to the PanB family. Homodecamer; pentamer of dimers. It depends on Mg(2+) as a cofactor.

Its subcellular location is the cytoplasm. It carries out the reaction 3-methyl-2-oxobutanoate + (6R)-5,10-methylene-5,6,7,8-tetrahydrofolate + H2O = 2-dehydropantoate + (6S)-5,6,7,8-tetrahydrofolate. It participates in cofactor biosynthesis; (R)-pantothenate biosynthesis; (R)-pantoate from 3-methyl-2-oxobutanoate: step 1/2. Catalyzes the reversible reaction in which hydroxymethyl group from 5,10-methylenetetrahydrofolate is transferred onto alpha-ketoisovalerate to form ketopantoate. In Psychrobacter cryohalolentis (strain ATCC BAA-1226 / DSM 17306 / VKM B-2378 / K5), this protein is 3-methyl-2-oxobutanoate hydroxymethyltransferase.